A 115-amino-acid polypeptide reads, in one-letter code: U3-lycotoxin-Ls1k (115 aa).

The first 20 residues, 1–20, serve as a signal peptide directing secretion; the sequence is MKFELLFGVLLVTLFSYSSA. The propeptide occupies 21–44; that stretch reads EMLDDFDQADEDELLSLIEKEEAR. Cystine bridges form between Cys48-Cys63, Cys55-Cys72, Cys62-Cys87, and Cys74-Cys85.

It belongs to the neurotoxin 19 (CSTX) family. 01 subfamily. In terms of tissue distribution, expressed by the venom gland.

It localises to the secreted. The chain is U3-lycotoxin-Ls1k from Lycosa singoriensis (Wolf spider).